The chain runs to 192 residues: Leucine-rich repeat-containing protein 51 (192 aa).

LRR repeat units lie at residues 50-71 (MTQS…NHAV), 80-101 (NLAW…LTTF), and 103-124 (NLSV…NKLA). Residues 137–175 (NPIEEEKGYRQYVLCTLPHITTFDFSGVTKADRTTAEVW) form the LRRCT domain.

It localises to the cytoplasm. This is Leucine-rich repeat-containing protein 51 from Bos taurus (Bovine).